Consider the following 580-residue polypeptide: Fumarate hydratase class I, aerobic (580 aa).

The [4Fe-4S] cluster site is built by C105, C224, and C318.

This sequence belongs to the class-I fumarase family. As to quaternary structure, homodimer. It depends on [4Fe-4S] cluster as a cofactor.

The enzyme catalyses (S)-malate = fumarate + H2O. It catalyses the reaction oxaloacetate = enol-oxaloacetate. It functions in the pathway carbohydrate metabolism; tricarboxylic acid cycle; (S)-malate from fumarate: step 1/1. In terms of biological role, catalyzes the reversible hydration of fumarate to (S)-malate. Functions as an aerobic enzyme in the direction of malate formation as part of the citric acid cycle. Accounts for about 80% of the fumarase activity when the bacteria grow aerobically. To a lesser extent, also displays D-tartrate dehydratase activity in vitro, but is not able to convert (R)-malate, L-tartrate or meso-tartrate. Can also catalyze the isomerization of enol- to keto-oxaloacetate. The chain is Fumarate hydratase class I, aerobic from Salmonella typhimurium (strain LT2 / SGSC1412 / ATCC 700720).